A 176-amino-acid polypeptide reads, in one-letter code: Ribosome maturation factor RimM (176 aa).

The PRC barrel domain occupies 103-176; the sequence is QNDEYYFYEI…KIVVKELEWI (74 aa).

This sequence belongs to the RimM family. In terms of assembly, binds ribosomal protein uS19.

The protein resides in the cytoplasm. Its function is as follows. An accessory protein needed during the final step in the assembly of 30S ribosomal subunit, possibly for assembly of the head region. Essential for efficient processing of 16S rRNA. May be needed both before and after RbfA during the maturation of 16S rRNA. It has affinity for free ribosomal 30S subunits but not for 70S ribosomes. The chain is Ribosome maturation factor RimM from Thermotoga neapolitana (strain ATCC 49049 / DSM 4359 / NBRC 107923 / NS-E).